The sequence spans 160 residues: Large ribosomal subunit protein eL21A (160 aa).

The tract at residues 114–138 (AKRKEAKAQGKTVQLRRQPAPPAKA) is disordered.

It belongs to the eukaryotic ribosomal protein eL21 family. As to quaternary structure, component of the large ribosomal subunit (LSU). Mature yeast ribosomes consist of a small (40S) and a large (60S) subunit. The 40S small subunit contains 1 molecule of ribosomal RNA (18S rRNA) and at least 33 different proteins. The large 60S subunit contains 3 rRNA molecules (25S, 5.8S and 5S rRNA) and at least 46 different proteins.

It localises to the cytoplasm. Component of the ribosome, a large ribonucleoprotein complex responsible for the synthesis of proteins in the cell. The small ribosomal subunit (SSU) binds messenger RNAs (mRNAs) and translates the encoded message by selecting cognate aminoacyl-transfer RNA (tRNA) molecules. The large subunit (LSU) contains the ribosomal catalytic site termed the peptidyl transferase center (PTC), which catalyzes the formation of peptide bonds, thereby polymerizing the amino acids delivered by tRNAs into a polypeptide chain. The nascent polypeptides leave the ribosome through a tunnel in the LSU and interact with protein factors that function in enzymatic processing, targeting, and the membrane insertion of nascent chains at the exit of the ribosomal tunnel. In Schizosaccharomyces pombe (strain 972 / ATCC 24843) (Fission yeast), this protein is Large ribosomal subunit protein eL21A (rpl2101).